A 145-amino-acid polypeptide reads, in one-letter code: Lysozyme C (145 aa).

The first 19 residues, 1–19 (MLFFGFLLAFLSAVPGTEG), serve as a signal peptide directing secretion. One can recognise a C-type lysozyme domain in the interval 20–145 (EIIPRCELVK…RDLSSYVKGC (126 aa)). 4 cysteine pairs are disulfide-bonded: Cys-25/Cys-145, Cys-49/Cys-133, Cys-82/Cys-98, and Cys-94/Cys-112. Catalysis depends on residues Glu-54 and Asp-70.

It belongs to the glycosyl hydrolase 22 family. Monomer.

The protein localises to the secreted. The enzyme catalyses Hydrolysis of (1-&gt;4)-beta-linkages between N-acetylmuramic acid and N-acetyl-D-glucosamine residues in a peptidoglycan and between N-acetyl-D-glucosamine residues in chitodextrins.. Lysozymes have primarily a bacteriolytic function; those in tissues and body fluids are associated with the monocyte-macrophage system and enhance the activity of immunoagents. The polypeptide is Lysozyme C (LYZ) (Opisthocomus hoazin (Hoatzin)).